The primary structure comprises 123 residues: Potassium voltage-gated channel subfamily E member 2 (123 aa).

2 N-linked (GlcNAc...) asparagine glycosylation sites follow: Asn6 and Asn29. The helical transmembrane segment at Val49–Val69 threads the bilayer. Over Ser70–Pro123 the chain is Cytoplasmic.

The protein belongs to the potassium channel KCNE family. As to quaternary structure, interacts with KCNB1. Associates with KCNH2/ERG1. May associate with KCNQ2 and KCNQ3. Associates with HCN1 and probably HCN2. Heteromultimer with KCNC2. Interacts with KCNC2. Interacts with KCNQ1; forms a heterooligomer complex that targets to the membrane raft and leading to currents with an apparently instantaneous activation, a rapid deactivation process and a linear current-voltage relationship and decreases the amplitude of the outward current. As to expression, highly expressed in brain, heart, skeletal muscle, pancreas, placenta, kidney, colon and thymus. A small but significant expression is found in liver, ovary, testis, prostate, small intestine and leukocytes. Very low expression, nearly undetectable, in lung and spleen.

It localises to the cell membrane. The protein localises to the apical cell membrane. Functionally, ancillary protein that functions as a regulatory subunit of the voltage-gated potassium (Kv) channel complex composed of pore-forming and potassium-conducting alpha subunits and of regulatory beta subunits. KCNE2 beta subunit modulates the gating kinetics and enhances stability of the channel complex. Alters the gating of the delayed rectifier Kv channel containing KCNB1 alpha subunit. Associates with KCNH2/HERG alpha subunit Kv channel to form the rapidly activating component of the delayed rectifying potassium current (IKr) in heart. May associate with KCNQ2 and/or KCNQ3 alpha subunits to modulate the native M-type current. May associate with HCN1 and HCN2 channel subunits to increase potassium current. Forms a heterooligomer complex with KCNQ1/KVLQT1 alpha subunits which leads to currents with an apparently instantaneous activation, a rapid deactivation process and a linear current-voltage relationship and decreases the amplitude of the outward current. KCNQ1-KCNE2 channel associates with Na(+)-coupled myo-inositol symporter in the apical membrane of choroid plexus epithelium and regulates the myo-inositol gradient between blood and cerebrospinal fluid with an impact on neuron excitability. The protein is Potassium voltage-gated channel subfamily E member 2 of Homo sapiens (Human).